A 152-amino-acid polypeptide reads, in one-letter code: MPLYEHVFLARQDVTAQQVEELTTRFKGVIEANGGSVGKTEYWGVKSLTYRINKNRKAHFTLLNINAPAAAIQELERQQRIDEDVLRILTLRVEEHEEGPSAMLQKRDRDDRGERGDRGDRGDRGDRGFGGREDRPRRPRPTEESHGGEEEV.

The segment at 96-152 (HEEGPSAMLQKRDRDDRGERGDRGDRGDRGDRGFGGREDRPRRPRPTEESHGGEEEV) is disordered.

This sequence belongs to the bacterial ribosomal protein bS6 family.

Functionally, binds together with bS18 to 16S ribosomal RNA. The polypeptide is Small ribosomal subunit protein bS6 (Xanthobacter autotrophicus (strain ATCC BAA-1158 / Py2)).